A 377-amino-acid chain; its full sequence is Chaperone protein DnaJ 1 (377 aa).

One can recognise a J domain in the interval 4–68; it reads DYYQTLGVTR…EIRQRYDQFG (65 aa). The CR-type zinc-finger motif lies at 136–218; sequence GGEKEIRIPH…CNGVGRKQET (83 aa). The Zn(2+) site is built by C149, C152, C166, C169, C192, C195, C206, and C209. CXXCXGXG motif repeat units lie at residues 149-156, 166-173, 192-199, and 206-213; these read CQVCEGTG, CGTCNGAG, CPTCNGSG, and CEACNGVG.

This sequence belongs to the DnaJ family. As to quaternary structure, homodimer. Requires Zn(2+) as cofactor.

The protein localises to the cytoplasm. In terms of biological role, participates actively in the response to hyperosmotic and heat shock by preventing the aggregation of stress-denatured proteins and by disaggregating proteins, also in an autonomous, DnaK-independent fashion. Unfolded proteins bind initially to DnaJ; upon interaction with the DnaJ-bound protein, DnaK hydrolyzes its bound ATP, resulting in the formation of a stable complex. GrpE releases ADP from DnaK; ATP binding to DnaK triggers the release of the substrate protein, thus completing the reaction cycle. Several rounds of ATP-dependent interactions between DnaJ, DnaK and GrpE are required for fully efficient folding. Also involved, together with DnaK and GrpE, in the DNA replication of plasmids through activation of initiation proteins. The chain is Chaperone protein DnaJ 1 from Synechocystis sp. (strain ATCC 27184 / PCC 6803 / Kazusa).